A 352-amino-acid polypeptide reads, in one-letter code: Mas-related G-protein coupled receptor member X2 (352 aa).

The Extracellular portion of the chain corresponds to 1-45 (MEERNISGRDLRVDSNITYWGTNITAVNESNHTGMSFCEVVSCTM). Asn-5, Asn-16, Asn-23, Asn-28, and Asn-31 each carry an N-linked (GlcNAc...) asparagine glycan. A helical transmembrane segment spans residues 46-66 (VFLSLIVALVGLVGNATVLWF). Residues 67-75 (LGFQMRRNA) are Cytoplasmic-facing. Residues 76–96 (FSVYILNLAGADFLFICFQIG) form a helical membrane-spanning segment. At 97–107 (YCFHMILDIDS) the chain is on the extracellular side. Residues 108–128 (IPIEIDLFYLVVLNFPYFCGL) traverse the membrane as a helical segment. Over 129-155 (SILSAISIERCLSVMWPIWYHCQRPRH) the chain is Cytoplasmic. A helical transmembrane segment spans residues 156–176 (TSAVICTLLWVLSLVCSLLEG). Topologically, residues 177–195 (KECGFLYYTSDPGWCKTFD) are extracellular. The chain crosses the membrane as a helical span at residues 196–216 (LITATWLIVLFVALLGSSLAL). Topologically, residues 217 to 239 (VITIFWGLHKIPVTRLYVAIVFT) are cytoplasmic. A helical membrane pass occupies residues 240–260 (VLVFLLFGLPYGIYWFLLVWI). Residues 261–275 (EKFYYVLPCSIYPVT) lie on the Extracellular side of the membrane. Residues 276-296 (VFLSCVNSSAKPIIYCLVGSI) form a helical membrane-spanning segment. The Cytoplasmic portion of the chain corresponds to 297–347 (RHHRFQRKTLKLFLQRAMQDTPEEEECGEMGSSGRSREIKTIWKGLRAALI).

Belongs to the G-protein coupled receptor 1 family. Mas subfamily.

The protein localises to the cell membrane. Functionally, orphan receptor. Probably involved in the function of nociceptive neurons. May regulate nociceptor function and/or development, including the sensation or modulation of pain. The polypeptide is Mas-related G-protein coupled receptor member X2 (Mrgprx2) (Mus musculus (Mouse)).